A 214-amino-acid chain; its full sequence is Adenylate kinase (214 aa).

Position 10–15 (10–15) interacts with ATP; that stretch reads GAGKGT. Residues 30-59 are NMP; the sequence is STGDMLRAAVKAGTPLGLEAKKVMDAGQLV. Residues T31, R36, 57-59, 85-88, and Q92 each bind AMP; these read QLV and GFPR. Residues 122–159 form an LID region; it reads GRRVHSGSGRVYHVVFNPPKVEGKDDVTGEDLSIRPDD. ATP is bound by residues R123 and 132 to 133; that span reads VY. AMP is bound by residues R156 and R167. Position 200 (Q200) interacts with ATP.

The protein belongs to the adenylate kinase family. In terms of assembly, monomer.

It localises to the cytoplasm. The enzyme catalyses AMP + ATP = 2 ADP. The protein operates within purine metabolism; AMP biosynthesis via salvage pathway; AMP from ADP: step 1/1. Its function is as follows. Catalyzes the reversible transfer of the terminal phosphate group between ATP and AMP. Plays an important role in cellular energy homeostasis and in adenine nucleotide metabolism. The protein is Adenylate kinase of Shewanella frigidimarina (strain NCIMB 400).